The sequence spans 306 residues: tRNA-cytidine(32) 2-sulfurtransferase (306 aa).

Residues 44 to 49 (SGGKDS) carry the PP-loop motif motif. Positions 119, 122, and 210 each coordinate [4Fe-4S] cluster.

It belongs to the TtcA family. As to quaternary structure, homodimer. It depends on Mg(2+) as a cofactor. Requires [4Fe-4S] cluster as cofactor.

It localises to the cytoplasm. It catalyses the reaction cytidine(32) in tRNA + S-sulfanyl-L-cysteinyl-[cysteine desulfurase] + AH2 + ATP = 2-thiocytidine(32) in tRNA + L-cysteinyl-[cysteine desulfurase] + A + AMP + diphosphate + H(+). It participates in tRNA modification. Catalyzes the ATP-dependent 2-thiolation of cytidine in position 32 of tRNA, to form 2-thiocytidine (s(2)C32). The sulfur atoms are provided by the cysteine/cysteine desulfurase (IscS) system. This Photorhabdus laumondii subsp. laumondii (strain DSM 15139 / CIP 105565 / TT01) (Photorhabdus luminescens subsp. laumondii) protein is tRNA-cytidine(32) 2-sulfurtransferase.